We begin with the raw amino-acid sequence, 233 residues long: tRNA (guanine-N(7)-)-methyltransferase (233 aa).

The S-adenosyl-L-methionine site is built by E62, E87, D114, and D136. D136 is an active-site residue. Residues K140, D172, and 211–214 contribute to the substrate site; that span reads TRYE.

It belongs to the class I-like SAM-binding methyltransferase superfamily. TrmB family.

It carries out the reaction guanosine(46) in tRNA + S-adenosyl-L-methionine = N(7)-methylguanosine(46) in tRNA + S-adenosyl-L-homocysteine. Its pathway is tRNA modification; N(7)-methylguanine-tRNA biosynthesis. In terms of biological role, catalyzes the formation of N(7)-methylguanine at position 46 (m7G46) in tRNA. This Erythrobacter litoralis (strain HTCC2594) protein is tRNA (guanine-N(7)-)-methyltransferase.